Consider the following 615-residue polypeptide: MPIQVLPPQLANQIAAGEVVERPASVVKELVENSLDAGATRIDIDIERGGAKLIRIRDNGCGIKKDELALALARHATSKIASLDDLEAIISLGFRGEALASISSVSRLTLTSRTVDQQEAWQAYAEGRDMDVTVKPAAHPVGTTLEVLDLFYNTPARRKFLRTEKTEFNHIDEIIRRIALARFDVTINLSHNGKIVRQYRAVPEGGQKERRLGAICGTAFLEHALAIEWQHGDLTLRGWVADPNHTTPTLAEIQYCYVNGRMMRDRLINHAIRQACENKLGADQQPAFVLYLEIDPHQVDVNVHPAKHEVRFHQSRLVHDFIYQGVLSVLQQQLETPLPLDDEPQPAPRTIPENRVAAGRNHFAEPAVREPVAPRYSPAPASGGRPAASWPNAQPGYQKQQGEVYRQLLQTPAPMQKPKAPEPQEPALAANSQSFGRVLTIVHSDCALLERDGNISLLALPVAERWLRQAQLTPGETPVCAQPLLIPLRLKVSGEEKSALEKAQSALAELGIDFQSDAQYVTIRAVPLPLRQQNLQILIPELIGYLAKQSVFEPGNIAQWIARNLMSEHAQWSMAQAITLLADVERLCPQLVKTPPGGLLQSVDLHPAIKALKDE.

Positions 362–397 are disordered; the sequence is HFAEPAVREPVAPRYSPAPASGGRPAASWPNAQPGY. Positions 378-391 are enriched in low complexity; the sequence is PAPASGGRPAASWP.

It belongs to the DNA mismatch repair MutL/HexB family.

Its function is as follows. This protein is involved in the repair of mismatches in DNA. It is required for dam-dependent methyl-directed DNA mismatch repair. May act as a 'molecular matchmaker', a protein that promotes the formation of a stable complex between two or more DNA-binding proteins in an ATP-dependent manner without itself being part of a final effector complex. The polypeptide is DNA mismatch repair protein MutL (Escherichia fergusonii (strain ATCC 35469 / DSM 13698 / CCUG 18766 / IAM 14443 / JCM 21226 / LMG 7866 / NBRC 102419 / NCTC 12128 / CDC 0568-73)).